The following is an 89-amino-acid chain: Small ribosomal subunit protein bS16 (89 aa).

Belongs to the bacterial ribosomal protein bS16 family.

The chain is Small ribosomal subunit protein bS16 from Psychrobacter arcticus (strain DSM 17307 / VKM B-2377 / 273-4).